A 482-amino-acid polypeptide reads, in one-letter code: MKIRTRYAPSPTGYLHIGGARTALFNYLLAKAYDGDFIIRIEDTDVERNVEGGIDSQFNFLEWMGIVADESIRNPKTFGPYIQSQKLKHYEALALDLVAQKKAYFCFCSKERLDADRELAEKLHETPKYKRHCLNLNEQTIQANLLANKEYTIRLKIDENNEYSWDDLIRGKISIPGSALTDPVILKSNKIAMYNFAVVIDDYEMQISHVIRGEEHISNTPYQLAIAQALNYDLSKIKYGHLSIIVDETGKKLSKRNLALKQFVSDYEKDGYWPHAITNFVALLGWSPKNNQEIMSLVEMVENFDVNNLSKSPAFFDINKMNWFSTQYFNNISQDEFIDFVKTHPLTKELVLKDTTFIDKALLFKSHIVNLKQLINLVDEQFNSNKQLLEEDVNHIKNNQLTNVVQVFYEQLIVSEKFDEQSIKEVIKQVQKTTNNKGANLYMPIRIATTFSSHGPELAKTIYYLGRENVLKNLQSILKVLG.

The short motif at 9–19 (PSPTGYLHIGG) is the 'HIGH' region element. A 'KMSKS' region motif is present at residues 252–256 (KLSKR). Lys255 contacts ATP.

This sequence belongs to the class-I aminoacyl-tRNA synthetase family. Glutamate--tRNA ligase type 1 subfamily. Monomer.

It is found in the cytoplasm. It carries out the reaction tRNA(Glu) + L-glutamate + ATP = L-glutamyl-tRNA(Glu) + AMP + diphosphate. In terms of biological role, catalyzes the attachment of glutamate to tRNA(Glu) in a two-step reaction: glutamate is first activated by ATP to form Glu-AMP and then transferred to the acceptor end of tRNA(Glu). This Ureaplasma urealyticum serovar 10 (strain ATCC 33699 / Western) protein is Glutamate--tRNA ligase.